The primary structure comprises 149 residues: DnaJ homolog subfamily C member 24 (149 aa).

One can recognise a J domain in the interval 11 to 82; sequence DWYSILGADP…ETKKEYDLQR (72 aa). The 56-residue stretch at 93–148 folds into the DPH-type MB domain; it reads VDARIYLEEMSWNEDDHSFSLSCRCGGKYSVSKDEAEEVTLISCDTCSLIIELLHY. Residues cysteine 115, cysteine 117, cysteine 136, and cysteine 139 each coordinate Zn(2+).

The protein belongs to the DPH4 family. As to quaternary structure, monomer and homooligomer. Iron binding promotes oligomerization.

The protein localises to the cytoplasm. Its subcellular location is the cytoskeleton. It functions in the pathway protein modification; peptidyl-diphthamide biosynthesis. Functionally, stimulates the ATPase activity of several Hsp70-type chaperones. This ability is enhanced by iron-binding. The iron-bound form is redox-active and can function as electron carrier. Plays a role in the diphthamide biosynthesis, a post-translational modification of histidine which occurs in translation elongation factor 2 (EEF2). The protein is DnaJ homolog subfamily C member 24 (DNAJC24) of Bos taurus (Bovine).